Consider the following 320-residue polypeptide: Lipoyl synthase (320 aa).

C67, C72, C78, C93, C97, C100, and S307 together coordinate [4Fe-4S] cluster. A Radical SAM core domain is found at 79 to 296 (FNHGTATFMI…REKANEMGFE (218 aa)).

Belongs to the radical SAM superfamily. Lipoyl synthase family. [4Fe-4S] cluster serves as cofactor.

It localises to the cytoplasm. It catalyses the reaction [[Fe-S] cluster scaffold protein carrying a second [4Fe-4S](2+) cluster] + N(6)-octanoyl-L-lysyl-[protein] + 2 oxidized [2Fe-2S]-[ferredoxin] + 2 S-adenosyl-L-methionine + 4 H(+) = [[Fe-S] cluster scaffold protein] + N(6)-[(R)-dihydrolipoyl]-L-lysyl-[protein] + 4 Fe(3+) + 2 hydrogen sulfide + 2 5'-deoxyadenosine + 2 L-methionine + 2 reduced [2Fe-2S]-[ferredoxin]. Its pathway is protein modification; protein lipoylation via endogenous pathway; protein N(6)-(lipoyl)lysine from octanoyl-[acyl-carrier-protein]: step 2/2. Its function is as follows. Catalyzes the radical-mediated insertion of two sulfur atoms into the C-6 and C-8 positions of the octanoyl moiety bound to the lipoyl domains of lipoate-dependent enzymes, thereby converting the octanoylated domains into lipoylated derivatives. This Glaesserella parasuis serovar 5 (strain SH0165) (Haemophilus parasuis) protein is Lipoyl synthase.